A 214-amino-acid chain; its full sequence is Somatotropin-A (214 aa).

Residues 1–25 form the signal peptide; the sequence is MATGFCSSFGLLVVLLLKNVADVGA. Disulfide bonds link cysteine 77–cysteine 187 and cysteine 204–cysteine 212.

The protein belongs to the somatotropin/prolactin family.

It is found in the secreted. Growth hormone plays an important role in growth control. This is Somatotropin-A (gh-a) from Xenopus laevis (African clawed frog).